The sequence spans 717 residues: Polyribonucleotide nucleotidyltransferase (717 aa).

Mg(2+) is bound by residues D488 and D494. The KH domain occupies 555–614 (PRIEVMNIPVDKIREVIGSGGKVIREIVEKTGAKINIEDDGTVKIASSSGKEIEAARKWI). The region spanning 624–692 (GQIYEGTVVK…ERGKVRLSMK (69 aa)) is the S1 motif domain.

The protein belongs to the polyribonucleotide nucleotidyltransferase family. Requires Mg(2+) as cofactor.

It localises to the cytoplasm. The enzyme catalyses RNA(n+1) + phosphate = RNA(n) + a ribonucleoside 5'-diphosphate. Its function is as follows. Involved in mRNA degradation. Catalyzes the phosphorolysis of single-stranded polyribonucleotides processively in the 3'- to 5'-direction. The protein is Polyribonucleotide nucleotidyltransferase of Sinorhizobium fredii (strain NBRC 101917 / NGR234).